Here is a 109-residue protein sequence, read N- to C-terminus: MSEDRVTLADLERIVAARAQADAGASYTRSLLDKGISKCAQKLGEEAVETALAAVGSDKAAVISETADLLYHLAVLLHAKGVELDEVHAELARRTRQSGHEEKASRQRS.

This sequence belongs to the PRA-PH family.

Its subcellular location is the cytoplasm. The enzyme catalyses 1-(5-phospho-beta-D-ribosyl)-ATP + H2O = 1-(5-phospho-beta-D-ribosyl)-5'-AMP + diphosphate + H(+). Its pathway is amino-acid biosynthesis; L-histidine biosynthesis; L-histidine from 5-phospho-alpha-D-ribose 1-diphosphate: step 2/9. This Azorhizobium caulinodans (strain ATCC 43989 / DSM 5975 / JCM 20966 / LMG 6465 / NBRC 14845 / NCIMB 13405 / ORS 571) protein is Phosphoribosyl-ATP pyrophosphatase.